The chain runs to 184 residues: Shikimate kinase (184 aa).

17–22 (SVGKTS) is a binding site for ATP. Position 21 (Thr21) interacts with Mg(2+). Substrate-binding residues include Asp39 and Gly85.

It belongs to the shikimate kinase family. In terms of assembly, monomer. Mg(2+) is required as a cofactor.

The protein resides in the cytoplasm. The enzyme catalyses shikimate + ATP = 3-phosphoshikimate + ADP + H(+). It participates in metabolic intermediate biosynthesis; chorismate biosynthesis; chorismate from D-erythrose 4-phosphate and phosphoenolpyruvate: step 5/7. Its function is as follows. Catalyzes the specific phosphorylation of the 3-hydroxyl group of shikimic acid using ATP as a cosubstrate. This is Shikimate kinase from Chlamydia muridarum (strain MoPn / Nigg).